Consider the following 126-residue polypeptide: MDMNQLFMQSIANSRGLCHPDCEKANNEREDYDASQHAAMVAVNLISSARVILKLDAVYTEYSAQYLVDNAGKEDNQGEMDQQSSQLTLQNLLQYMDENVWNKKEDVQGEREQPLTVKDCLECAFK.

This sequence belongs to the heat induced plant HTT protein family. As to expression, expressed in seedlings, leaves, stems, inflorescences and siliques.

Its subcellular location is the cytoplasm. It is found in the nucleus. In terms of biological role, mediates both basal and acquired thermotolerance. In Arabidopsis thaliana (Mouse-ear cress), this protein is Protein HEAT-INDUCED TAS1 TARGET 3.